Here is a 402-residue protein sequence, read N- to C-terminus: Flavohemoprotein (402 aa).

One can recognise a Globin domain in the interval 1–138 (MLSPEVRALV…LADLLIGRER (138 aa)). Residue His85 coordinates heme b. Active-site charge relay system residues include Tyr95 and Glu137. A reductase region spans residues 149–402 (GGWTGWRAFK…AEVFGTGGVA (254 aa)). In terms of domain architecture, FAD-binding FR-type spans 152–261 (TGWRAFKVVR…SPPQGDFTLD (110 aa)). FAD-binding positions include Tyr190 and 206-209 (RQYS). Position 274 to 279 (274 to 279 (GVGLTP)) interacts with NADP(+). An FAD-binding site is contributed by 395-398 (VFGT).

It belongs to the globin family. Two-domain flavohemoproteins subfamily. In the C-terminal section; belongs to the flavoprotein pyridine nucleotide cytochrome reductase family. Heme b is required as a cofactor. Requires FAD as cofactor.

It carries out the reaction 2 nitric oxide + NADPH + 2 O2 = 2 nitrate + NADP(+) + H(+). The enzyme catalyses 2 nitric oxide + NADH + 2 O2 = 2 nitrate + NAD(+) + H(+). Its function is as follows. Is involved in NO detoxification in an aerobic process, termed nitric oxide dioxygenase (NOD) reaction that utilizes O(2) and NAD(P)H to convert NO to nitrate, which protects the bacterium from various noxious nitrogen compounds. Therefore, plays a central role in the inducible response to nitrosative stress. This chain is Flavohemoprotein, found in Bordetella pertussis (strain Tohama I / ATCC BAA-589 / NCTC 13251).